We begin with the raw amino-acid sequence, 636 residues long: tRNA 5-methylaminomethyl-2-thiouridine biosynthesis bifunctional protein MnmC (636 aa).

Residues 1–202 (MTVSKILKQV…ERAALRAQSH (202 aa)) form a tRNA (mnm(5)s(2)U34)-methyltransferase region. The FAD-dependent cmnm(5)s(2)U34 oxidoreductase stretch occupies residues 227-636 (IGGGVASACL…GKALEMSGKS (410 aa)).

It in the N-terminal section; belongs to the methyltransferase superfamily. tRNA (mnm(5)s(2)U34)-methyltransferase family. In the C-terminal section; belongs to the DAO family. FAD serves as cofactor.

It is found in the cytoplasm. It catalyses the reaction 5-aminomethyl-2-thiouridine(34) in tRNA + S-adenosyl-L-methionine = 5-methylaminomethyl-2-thiouridine(34) in tRNA + S-adenosyl-L-homocysteine + H(+). Its function is as follows. Catalyzes the last two steps in the biosynthesis of 5-methylaminomethyl-2-thiouridine (mnm(5)s(2)U) at the wobble position (U34) in tRNA. Catalyzes the FAD-dependent demodification of cmnm(5)s(2)U34 to nm(5)s(2)U34, followed by the transfer of a methyl group from S-adenosyl-L-methionine to nm(5)s(2)U34, to form mnm(5)s(2)U34. This is tRNA 5-methylaminomethyl-2-thiouridine biosynthesis bifunctional protein MnmC from Shewanella halifaxensis (strain HAW-EB4).